The primary structure comprises 303 residues: Nucleotide-binding protein SAR0820 (303 aa).

18–25 (GLSGAGKS) contacts ATP. 69–72 (DLRG) contacts GTP.

Belongs to the RapZ-like family.

Functionally, displays ATPase and GTPase activities. In Staphylococcus aureus (strain MRSA252), this protein is Nucleotide-binding protein SAR0820.